The chain runs to 151 residues: Large ribosomal subunit protein bL9 (151 aa).

This sequence belongs to the bacterial ribosomal protein bL9 family.

In terms of biological role, binds to the 23S rRNA. This is Large ribosomal subunit protein bL9 from Rhodococcus erythropolis (strain PR4 / NBRC 100887).